Here is a 1787-residue protein sequence, read N- to C-terminus: ATP-dependent RNA helicase DEAH11, chloroplastic (1787 aa).

The transit peptide at 1 to 33 directs the protein to the chloroplast; it reads MRNSFPPSDGGRSTTDRRQQSFPSSSTNRYNSR. The disordered stretch occupies residues 1–75; that stretch reads MRNSFPPSDG…DRAPSSGFSP (75 aa). The segment covering 20–60 has biased composition (polar residues); the sequence is QSFPSSSTNRYNSRSAQSSPPLNHCTTWNQQHSQYHNTNFP. A Helicase ATP-binding domain is found at 313–477; the sequence is LKKIHCEQIM…LFDCGILHVN (165 aa). Residue 326-333 coordinates ATP; the sequence is GETGSGKS. A DEAH box motif is present at residues 424–427; that stretch reads DEAH. Residues 507–673 form the Helicase C-terminal domain; the sequence is DVVKMAVEIH…VALLRMLALG (167 aa). Positions 1557–1764 are TRIAD supradomain; sequence IELECPICLS…EPCYAHLRTI (208 aa). Positions 1561, 1564, 1577, 1579, 1582, 1585, 1604, 1609, 1649, 1654, 1672, 1675, 1680, 1683, 1688, 1693, 1719, and 1722 each coordinate Zn(2+). The segment at 1561 to 1609 adopts an RING-type 1 zinc-finger fold; sequence CPICLSEVDDGYSLEGCSHLFCKACLLEQFEASMRNFDAFPILCSHIDC. The IBR-type zinc-finger motif lies at 1628–1693; sequence DELISASLSA…HLEYHPLITC (66 aa). The RING-type 2; atypical zinc finger occupies 1719 to 1747; the sequence is CPICKSTIEKTDGCNHLQCRCGKHICWTC. Cys-1732 is an active-site residue. Residues Cys-1737 and Cys-1739 each coordinate Zn(2+).

Belongs to the DEAD box helicase family. DEAH subfamily.

It localises to the plastid. It is found in the chloroplast. It carries out the reaction ATP + H2O = ADP + phosphate + H(+). The sequence is that of ATP-dependent RNA helicase DEAH11, chloroplastic from Arabidopsis thaliana (Mouse-ear cress).